The following is a 114-amino-acid chain: Protein LLP homolog (114 aa).

Composition is skewed to basic residues over residues 1–21 (MAKSLRSKWKRKMRAEKRKKN) and 91–108 (QRKKLKAQRLKGKKKSKL). 2 disordered regions span residues 1-23 (MAKSLRSKWKRKMRAEKRKKNAP) and 91-114 (QRKKLKAQRLKGKKKSKLPKGLAW).

The protein belongs to the learning-associated protein family.

It localises to the nucleus. Its subcellular location is the nucleolus. The protein resides in the chromosome. In terms of biological role, regulates dendritic and spine growth and synaptic transmission. This chain is Protein LLP homolog (LLPH), found in Gallus gallus (Chicken).